The primary structure comprises 223 residues: RNA pyrophosphohydrolase (223 aa).

The region spanning 6 to 149 is the Nudix hydrolase domain; that stretch reads GFRPNVGIIL…KRGVYEMALT (144 aa). The Nudix box signature appears at 38–59; that stretch reads GGIDRGESPEQAMFRELHEEVG. A disordered region spans residues 175 to 223; the sequence is ERHMPDGGAPAGLDLPPGGSFDPHPDITSASDDPSPPPHNKAPFLPSQR. The segment covering 180-193 has biased composition (low complexity); the sequence is DGGAPAGLDLPPGG.

The protein belongs to the Nudix hydrolase family. RppH subfamily. The cofactor is a divalent metal cation.

Functionally, accelerates the degradation of transcripts by removing pyrophosphate from the 5'-end of triphosphorylated RNA, leading to a more labile monophosphorylated state that can stimulate subsequent ribonuclease cleavage. This Variovorax paradoxus (strain S110) protein is RNA pyrophosphohydrolase.